The chain runs to 235 residues: Glucosamine-6-phosphate deaminase (235 aa).

The Proton acceptor; for enolization step role is filled by aspartate 62. Asparagine 128 serves as the catalytic For ring-opening step. Histidine 130 serves as the catalytic Proton acceptor; for ring-opening step. Residue glutamate 135 is the For ring-opening step of the active site.

It belongs to the glucosamine/galactosamine-6-phosphate isomerase family. NagB subfamily.

It carries out the reaction alpha-D-glucosamine 6-phosphate + H2O = beta-D-fructose 6-phosphate + NH4(+). The protein operates within amino-sugar metabolism; N-acetylneuraminate degradation; D-fructose 6-phosphate from N-acetylneuraminate: step 5/5. Catalyzes the reversible isomerization-deamination of glucosamine 6-phosphate (GlcN6P) to form fructose 6-phosphate (Fru6P) and ammonium ion. This is Glucosamine-6-phosphate deaminase from Streptococcus sanguinis (strain SK36).